The sequence spans 230 residues: Eukaryotic translation initiation factor 4E-1 (230 aa).

The interval 1–53 is disordered; sequence MVVEDSQKSTITDEQNPSRVDNDDDDLEDGEILEDADDAASAASKPPSAFLRN. Residues 8 to 19 show a composition bias toward polar residues; sequence KSTITDEQNPSR. Acidic residues predominate over residues 22-38; the sequence is NDDDDLEDGEILEDADD. Low complexity predominate over residues 39–49; it reads AASAASKPPSA. 2 EIF4G-binding regions span residues 55 to 58 and 65 to 101; these read HPLE and FDNPSAKSKQAAWGSSIRPIYTFSTVEEFWSIYNNIH. Residues 73-78, lysine 105, and 123-124 each bind mRNA; these read KQAAWG and WE. A disulfide bridge connects residues cysteine 128 and cysteine 166. The tract at residues 149-158 is EIF4G-binding; it reads YTLLAMIGEQ. Residues 173–178 and 218–222 each bind mRNA; these read RNRQDK and KKHER.

The protein belongs to the eukaryotic initiation factor 4E family. As to quaternary structure, EIF4F is a multi-subunit complex, the composition of which varies with external and internal environmental conditions. It is composed of at least EIF4A, EIF4E and EIF4G. EIF4E is also known to interact with other partners. In higher plants two isoforms of EIF4F have been identified, named isoform EIF4F and isoform EIF(iso)4F. Isoform EIF4F has subunits p220 and p26, whereas isoform EIF(iso)4F has subunits p82 and p28. In terms of assembly, (Microbial infection) Interacts with potyvirus viral genome-linked protein (VPg); this interaction is possible in susceptible hosts but impaired in resistant plants. In terms of processing, according to the redox status, the Cys-128-Cys-166 disulfide bridge may have a role in regulating protein function by affecting its ability to bind capped mRNA.

It localises to the nucleus. Its subcellular location is the cytoplasm. Component of the protein complex eIF4F, which is involved in the recognition of the mRNA cap, ATP-dependent unwinding of 5'-terminal secondary structure and recruitment of mRNA to the ribosome. Recognizes and binds the 7-methylguanosine-containing mRNA cap during an early step in the initiation of protein synthesis and facilitates ribosome binding by inducing the unwinding of the mRNAs secondary structures. Key component of recessive resistance to potyviruses. Its function is as follows. (Microbial infection) Susceptibility host factor required for viral infection by recruiting viral RNAs to the host ribosomal complex via an interaction with viral genome-linked protein (VPg). This is Eukaryotic translation initiation factor 4E-1 from Phaseolus vulgaris (Kidney bean).